A 230-amino-acid polypeptide reads, in one-letter code: Cytochrome b6-f complex iron-sulfur subunit, chloroplastic (230 aa).

Residues 1–16 show a composition bias toward low complexity; sequence MASTTLSATPTPSQLS. The segment at 1 to 20 is disordered; the sequence is MASTTLSATPTPSQLSAAKN. The N-terminal 56 residues, 1–56, are a transit peptide targeting the chloroplast; the sequence is MASTTLSATPTPSQLSAAKNGAYSPSRALLGKTARGLYPEKEMVSRKVTCQATSIP. Residues 73-93 traverse the membrane as a helical segment; that stretch reads LLGALSLPTAGMLIPYGAFFV. The 97-residue stretch at 116 to 212 folds into the Rieske domain; the sequence is AAAWLKTHGP…CDISEEGKVV (97 aa). Residues C158, H160, C176, and H179 each contribute to the [2Fe-2S] cluster site. Cysteines 163 and 178 form a disulfide.

The protein belongs to the Rieske iron-sulfur protein family. In terms of assembly, the 4 large subunits of the cytochrome b6-f complex are cytochrome b6, subunit IV (17 kDa polypeptide, petD), cytochrome f and the Rieske protein, while the 4 small subunits are petG, petL, petM and petN. The complex functions as a dimer. The cofactor is [2Fe-2S] cluster.

Its subcellular location is the plastid. It localises to the chloroplast thylakoid membrane. It catalyses the reaction 2 oxidized [plastocyanin] + a plastoquinol + 2 H(+)(in) = 2 reduced [plastocyanin] + a plastoquinone + 4 H(+)(out). Its function is as follows. Component of the cytochrome b6-f complex, which mediates electron transfer between photosystem II (PSII) and photosystem I (PSI), cyclic electron flow around PSI, and state transitions. This Fritillaria agrestis (Stinkbells) protein is Cytochrome b6-f complex iron-sulfur subunit, chloroplastic (petC).